A 127-amino-acid chain; its full sequence is Fluoride-specific ion channel FluC (127 aa).

4 consecutive transmembrane segments (helical) span residues 7 to 27 (LILI…MGLI), 37 to 57 (FGTL…MAMI), 69 to 89 (LFMI…SAEV), and 102 to 122 (LGIM…GVLI). The Na(+) site is built by G77 and T80.

Belongs to the fluoride channel Fluc/FEX (TC 1.A.43) family.

It localises to the cell inner membrane. The catalysed reaction is fluoride(in) = fluoride(out). Its activity is regulated as follows. Na(+) is not transported, but it plays an essential structural role and its presence is essential for fluoride channel function. Fluoride-specific ion channel. Important for reducing fluoride concentration in the cell, thus reducing its toxicity. This Mannheimia succiniciproducens (strain KCTC 0769BP / MBEL55E) protein is Fluoride-specific ion channel FluC.